Consider the following 75-residue polypeptide: MTIFNSISSISNPTRSTSSSIATLNYTGSVFNDNSTACFDNDLGRWGGCGGCGGSNVNIINLDIDIGRRRHRRCC.

The protein belongs to the UPF0512 family.

The sequence is that of UPF0512 protein C from Dictyostelium discoideum (Social amoeba).